The following is a 70-amino-acid chain: Large ribosomal subunit protein uL29 (70 aa).

Belongs to the universal ribosomal protein uL29 family.

This is Large ribosomal subunit protein uL29 from Clostridium botulinum (strain Eklund 17B / Type B).